Reading from the N-terminus, the 287-residue chain is U1 small nuclear ribonucleoprotein A (287 aa).

Residues 16–95 enclose the RRM 1 domain; that stretch reads HTIYINNLNE…KPMRIQYAKT (80 aa). Position 66 is an N6-acetyllysine (K66). Positions 106 to 134 are disordered; it reads TYVERDRKREKRKPKSQETPAAKKAVQGG. Positions 125–134 are enriched in low complexity; it reads PAAKKAVQGG. An Omega-N-methylarginine modification is found at R157. One can recognise an RRM 2 domain in the interval 213–287; sequence HILFLTNLPE…NAMKISFAKK (75 aa).

This sequence belongs to the RRM U1 A/B'' family. In terms of assembly, U1 snRNP is composed of the 7 core Sm proteins SNRPB, SNRPD1, SNRPD2, SNRPD3, SNRPE, SNRPF and SNRPG that assemble in a heptameric protein ring on the Sm site of the small nuclear RNA to form the core snRNP, and at least three U1 snRNP-specific proteins SNRNP70/U1-70K, SNRPA/U1-A and SNRPC/U1-C. Interacts with SFPQ; component of a snRNP-free complex with SFPQ. Interacts with IVNS1ABP (via BACK domain); the interaction is indirect.

The protein localises to the nucleus. In terms of biological role, component of the spliceosomal U1 snRNP, which is essential for recognition of the pre-mRNA 5' splice-site and the subsequent assembly of the spliceosome. U1 snRNP is the first snRNP to interact with pre-mRNA. This interaction is required for the subsequent binding of U2 snRNP and the U4/U6/U5 tri-snRNP. SNRPA binds stem loop II of U1 snRNA. In a snRNP-free form (SF-A) may be involved in coupled pre-mRNA splicing and polyadenylation process. May bind preferentially to the 5'-UGCAC-3' motif on RNAs. In Mus musculus (Mouse), this protein is U1 small nuclear ribonucleoprotein A (Snrpa).